The primary structure comprises 259 residues: Thiazole synthase (259 aa).

The active-site Schiff-base intermediate with DXP is the Lys-98. Residues Gly-159, 185–186, and 207–208 each bind 1-deoxy-D-xylulose 5-phosphate; these read AG and NS.

Belongs to the ThiG family. Homotetramer. Forms heterodimers with either ThiH or ThiS.

Its subcellular location is the cytoplasm. The enzyme catalyses [ThiS sulfur-carrier protein]-C-terminal-Gly-aminoethanethioate + 2-iminoacetate + 1-deoxy-D-xylulose 5-phosphate = [ThiS sulfur-carrier protein]-C-terminal Gly-Gly + 2-[(2R,5Z)-2-carboxy-4-methylthiazol-5(2H)-ylidene]ethyl phosphate + 2 H2O + H(+). It functions in the pathway cofactor biosynthesis; thiamine diphosphate biosynthesis. Functionally, catalyzes the rearrangement of 1-deoxy-D-xylulose 5-phosphate (DXP) to produce the thiazole phosphate moiety of thiamine. Sulfur is provided by the thiocarboxylate moiety of the carrier protein ThiS. In vitro, sulfur can be provided by H(2)S. The chain is Thiazole synthase from Chlorobaculum tepidum (strain ATCC 49652 / DSM 12025 / NBRC 103806 / TLS) (Chlorobium tepidum).